Here is a 285-residue protein sequence, read N- to C-terminus: Probable endonuclease 4 (285 aa).

Zn(2+) contacts are provided by His-69, His-109, Glu-145, Asp-179, His-182, His-216, Asp-229, His-231, and Glu-261.

This sequence belongs to the AP endonuclease 2 family. It depends on Zn(2+) as a cofactor.

The catalysed reaction is Endonucleolytic cleavage to 5'-phosphooligonucleotide end-products.. Endonuclease IV plays a role in DNA repair. It cleaves phosphodiester bonds at apurinic or apyrimidinic (AP) sites, generating a 3'-hydroxyl group and a 5'-terminal sugar phosphate. This is Probable endonuclease 4 from Salmonella agona (strain SL483).